Consider the following 202-residue polypeptide: Transmembrane gamma-carboxyglutamic acid protein 2 (202 aa).

The first 23 residues, 1-23 (MRGHPSLLLLYMALTTCLDTSPS), serve as a signal peptide directing secretion. Residues 24–49 (EETDQEVFLGPPEAQSFLSSHTRIPR) constitute a propeptide that is removed on maturation. Residues 50-96 (ANHWDLELLTPGNLERECLEERCSWEEAREYFEDNTLTERFWESYIY) form the Gla domain. The Extracellular segment spans residues 50-109 (ANHWDLELLTPGNLERECLEERCSWEEAREYFEDNTLTERFWESYIYNGKGGRGRVDVAS). The cysteines at positions 67 and 72 are disulfide-linked. Residue E70 is modified to 4-carboxyglutamate. Residues 110-130 (LAVGLTGGILLIVLAGLGAFW) traverse the membrane as a helical segment. Over 131–202 (YLRWRQHRGQ…PPYTSLRRPH (72 aa)) the chain is Cytoplasmic. A disordered region spans residues 143–202 (CPQEAGLISPLSPLNPLGPPTPLPPPPPPPPGLPTYEQALAASGVHDAPPPPYTSLRRPH). The span at 158-175 (PLGPPTPLPPPPPPPPGL) shows a compositional bias: pro residues. An LPXY motif; mediates binding to WW domain-containing proteins motif is present at residues 175 to 178 (LPTY). A PPXY motif; mediates binding to WW domain-containing proteins motif is present at residues 192 to 195 (PPPY).

As to quaternary structure, interacts with NEDD4. Interacts (via cytoplasmic domain) with transcriptional coactivator YAP1. Post-translationally, gamma-carboxyglutamate residues are formed by vitamin K dependent carboxylation. These residues are essential for the binding of calcium. As to expression, widely expressed with highest levels in kidney. Also highly expressed in the thyroid.

It localises to the cell membrane. The sequence is that of Transmembrane gamma-carboxyglutamic acid protein 2 from Homo sapiens (Human).